Consider the following 190-residue polypeptide: Outer-membrane lipoprotein LolB (190 aa).

The signal sequence occupies residues 1-16 (MRLRFSLLLTVSLLAG). C17 carries N-palmitoyl cysteine lipidation. Residue C17 is the site of S-diacylglycerol cysteine attachment.

The protein belongs to the LolB family. Monomer.

The protein resides in the cell outer membrane. Its function is as follows. Plays a critical role in the incorporation of lipoproteins in the outer membrane after they are released by the LolA protein. This Dechloromonas aromatica (strain RCB) protein is Outer-membrane lipoprotein LolB.